A 654-amino-acid chain; its full sequence is DNA ligase (654 aa).

NAD(+) is bound by residues 31–35, 80–81, and glutamate 109; these read DSEYD and SL. Lysine 111 (N6-AMP-lysine intermediate) is an active-site residue. 4 residues coordinate NAD(+): arginine 132, glutamate 166, lysine 280, and lysine 304. Positions 398, 401, 416, and 421 each coordinate Zn(2+). Residues 579 to 654 form the BRCT domain; sequence NIEGILSGKT…IWSEQDLLDL (76 aa).

It belongs to the NAD-dependent DNA ligase family. LigA subfamily. Mg(2+) is required as a cofactor. Mn(2+) serves as cofactor.

The enzyme catalyses NAD(+) + (deoxyribonucleotide)n-3'-hydroxyl + 5'-phospho-(deoxyribonucleotide)m = (deoxyribonucleotide)n+m + AMP + beta-nicotinamide D-nucleotide.. Functionally, DNA ligase that catalyzes the formation of phosphodiester linkages between 5'-phosphoryl and 3'-hydroxyl groups in double-stranded DNA using NAD as a coenzyme and as the energy source for the reaction. It is essential for DNA replication and repair of damaged DNA. This is DNA ligase from Lactococcus lactis subsp. lactis (strain IL1403) (Streptococcus lactis).